Here is a 438-residue protein sequence, read N- to C-terminus: Innexin inx7 (438 aa).

The Cytoplasmic portion of the chain corresponds to 1–23 (MLNTFSSVRQYLKFDLTRVVIDN). Residues 24-44 (IVFKLHYRWTFVILLVATLLI) form a helical membrane-spanning segment. At 45–58 (TSRQYIGEHIQCLS) the chain is on the extracellular side. Residues 59 to 79 (DGVVSPVINTFCFFTPTFTVV) form a helical membrane-spanning segment. At 80–112 (RDQNQTAYRPGSEPPGIGAFDPEKDTIKRHAYY) the chain is on the cytoplasmic side. Residues 113 to 133 (QWVPFVLFFQALCFYIPHALW) traverse the membrane as a helical segment. Residues 134–283 (KSWEGGRIKA…VMALNIMNEK (150 aa)) lie on the Extracellular side of the membrane. The chain crosses the membrane as a helical span at residues 284-304 (IYIILWFWYAFLLIVTVLGLL). Residues 305 to 438 (WRILTLCFYR…STSDMAKLPV (134 aa)) lie on the Cytoplasmic side of the membrane. 2 disordered regions span residues 381–402 (NDVN…PELS) and 415–438 (RRNG…KLPV). A compositionally biased stretch (low complexity) spans 418–431 (GSPSAGGAQGPSTS).

The protein belongs to the pannexin family. As to expression, expressed around gut lobes in embryonic stages 15-17.

The protein resides in the cell membrane. It is found in the cell junction. It localises to the gap junction. In terms of biological role, structural components of the gap junctions. This is Innexin inx7 (Inx7) from Drosophila melanogaster (Fruit fly).